The sequence spans 146 residues: UPF0178 protein BCAH187_A3092 (146 aa).

The protein belongs to the UPF0178 family.

This is UPF0178 protein BCAH187_A3092 from Bacillus cereus (strain AH187).